The chain runs to 152 residues: Ribosome maturation factor RimP (152 aa).

This sequence belongs to the RimP family.

The protein resides in the cytoplasm. Functionally, required for maturation of 30S ribosomal subunits. This is Ribosome maturation factor RimP from Yersinia pestis.